Reading from the N-terminus, the 29-residue chain is Cycloviolacin-O21 (29 aa).

Positions 1 to 29 (GLPVCGETCVTGSCYTPGCTCSWPVCTRN) form a cross-link, cyclopeptide (Gly-Asn). Disulfide bonds link Cys5–Cys19, Cys9–Cys21, and Cys14–Cys26.

In terms of processing, this is a cyclic peptide. As to expression, expressed in leaves, petals, petioles, and runners but not in roots (at protein level).

In terms of biological role, probably participates in a plant defense mechanism. In Viola odorata (Sweet violet), this protein is Cycloviolacin-O21.